The primary structure comprises 94 residues: Large ribosomal subunit protein bL25 (94 aa).

The protein belongs to the bacterial ribosomal protein bL25 family. In terms of assembly, part of the 50S ribosomal subunit; part of the 5S rRNA/L5/L18/L25 subcomplex. Contacts the 5S rRNA. Binds to the 5S rRNA independently of L5 and L18.

In terms of biological role, this is one of the proteins that binds to the 5S RNA in the ribosome where it forms part of the central protuberance. The protein is Large ribosomal subunit protein bL25 of Salmonella arizonae (strain ATCC BAA-731 / CDC346-86 / RSK2980).